We begin with the raw amino-acid sequence, 150 residues long: UPF0178 protein Rru_A0086 (150 aa).

This sequence belongs to the UPF0178 family.

This is UPF0178 protein Rru_A0086 from Rhodospirillum rubrum (strain ATCC 11170 / ATH 1.1.1 / DSM 467 / LMG 4362 / NCIMB 8255 / S1).